The sequence spans 511 residues: Light-independent protochlorophyllide reductase subunit B (511 aa).

Position 36 (aspartate 36) interacts with [4Fe-4S] cluster. The Proton donor role is filled by aspartate 299. 434 to 435 (GM) provides a ligand contact to substrate.

This sequence belongs to the ChlB/BchB/BchZ family. As to quaternary structure, protochlorophyllide reductase is composed of three subunits; ChlL, ChlN and ChlB. Forms a heterotetramer of two ChlB and two ChlN subunits. It depends on [4Fe-4S] cluster as a cofactor.

It localises to the plastid. The protein localises to the chloroplast. The catalysed reaction is chlorophyllide a + oxidized 2[4Fe-4S]-[ferredoxin] + 2 ADP + 2 phosphate = protochlorophyllide a + reduced 2[4Fe-4S]-[ferredoxin] + 2 ATP + 2 H2O. Its pathway is porphyrin-containing compound metabolism; chlorophyll biosynthesis (light-independent). Component of the dark-operative protochlorophyllide reductase (DPOR) that uses Mg-ATP and reduced ferredoxin to reduce ring D of protochlorophyllide (Pchlide) to form chlorophyllide a (Chlide). This reaction is light-independent. The NB-protein (ChlN-ChlB) is the catalytic component of the complex. The chain is Light-independent protochlorophyllide reductase subunit B from Huperzia lucidula (Shining clubmoss).